We begin with the raw amino-acid sequence, 358 residues long: Stearoyl-CoA desaturase 2 (358 aa).

Residues 1–71 (MPAHILQEIS…EGPPPKLEYV (71 aa)) are Cytoplasmic-facing. The interval 14–43 (SATTTITAPPSGGQQNGGEKFEKNPHHWGA) is disordered. Basic and acidic residues predominate over residues 32–43 (EKFEKNPHHWGA). The chain crosses the membrane as a helical span at residues 72–92 (WRNIVLMALLHIGALYGITLV). Asn-74 is a binding site for substrate. Topologically, residues 93 to 96 (PSCK) are lumenal. Residues 97–117 (VYTCLFAYLYYVISALGITAG) traverse the membrane as a helical segment. Over 118-216 (AHRLWSHRTY…EKLVMFQRRY (99 aa)) the chain is Cytoplasmic. The Fe cation site is built by His-119 and His-124. The short motif at 119 to 124 (HRLWSH) is the Histidine box-1 element. Residues Asn-147, Arg-154, and Asp-155 each coordinate substrate. 3 residues coordinate Fe cation: His-156, His-159, and His-160. The Histidine box-2 motif lies at 156–160 (HRAHH). The substrate site is built by Arg-187 and Lys-188. Residues 217 to 236 (YKPGLLLMCFILPTLVPWYC) traverse the membrane as a helical segment. The Lumenal portion of the chain corresponds to 237–240 (WGET). The helical transmembrane segment at 241–262 (FVNSLCVSTFLRYAVVLNATWL) threads the bilayer. Trp-261 provides a ligand contact to substrate. Topologically, residues 263–358 (VNSAAHLYGY…RTGEESCKSG (96 aa)) are cytoplasmic. Fe cation is bound by residues His-268, His-297, His-300, and His-301. A Histidine box-3 motif is present at residues 297–301 (HNYHH).

This sequence belongs to the fatty acid desaturase type 1 family. It depends on Fe(2+) as a cofactor. In terms of tissue distribution, detected in brain and adipose tissue, and at much lower levels in testis. Detected in liver when rats are kept on a fat-free diet, but not when their food contains unsaturated fatty acids.

It is found in the endoplasmic reticulum membrane. The protein localises to the microsome membrane. The enzyme catalyses octadecanoyl-CoA + 2 Fe(II)-[cytochrome b5] + O2 + 2 H(+) = (9Z)-octadecenoyl-CoA + 2 Fe(III)-[cytochrome b5] + 2 H2O. The catalysed reaction is hexadecanoyl-CoA + 2 Fe(II)-[cytochrome b5] + O2 + 2 H(+) = (9Z)-hexadecenoyl-CoA + 2 Fe(III)-[cytochrome b5] + 2 H2O. Stearoyl-CoA desaturase that utilizes O(2) and electrons from reduced cytochrome b5 to introduce the first double bond into saturated fatty acyl-CoA substrates. Catalyzes the insertion of a cis double bond at the delta-9 position into fatty acyl-CoA substrates including palmitoyl-CoA and stearoyl-CoA. Gives rise to a mixture of 16:1 and 18:1 unsaturated fatty acids. Contributes to the biosynthesis of membrane phospholipids, cholesterol esters and triglycerides, especially during embryonic development and in neonates. Important for normal permeability barrier function of the skin in neonates. In Rattus norvegicus (Rat), this protein is Stearoyl-CoA desaturase 2 (Scd2).